The following is a 161-amino-acid chain: Transcription antitermination protein NusB (161 aa).

The disordered stretch occupies residues 1–22; that stretch reads MNLSDFKPGEGTEVPEEEKSVS.

It belongs to the NusB family.

Functionally, involved in transcription antitermination. Required for transcription of ribosomal RNA (rRNA) genes. Binds specifically to the boxA antiterminator sequence of the ribosomal RNA (rrn) operons. The polypeptide is Transcription antitermination protein NusB (Hydrogenovibrio crunogenus (strain DSM 25203 / XCL-2) (Thiomicrospira crunogena)).